A 40-amino-acid chain; its full sequence is Photosystem II reaction center protein J (40 aa).

A helical membrane pass occupies residues 8–28 (IPLWLIGTVTGIPVIGSMGIF).

The protein belongs to the PsbJ family. As to quaternary structure, PSII is composed of 1 copy each of membrane proteins PsbA, PsbB, PsbC, PsbD, PsbE, PsbF, PsbH, PsbI, PsbJ, PsbK, PsbL, PsbM, PsbT, PsbX, PsbY, PsbZ, Psb30/Ycf12, at least 3 peripheral proteins of the oxygen-evolving complex and a large number of cofactors. It forms dimeric complexes.

The protein resides in the plastid. The protein localises to the chloroplast thylakoid membrane. Its function is as follows. One of the components of the core complex of photosystem II (PSII). PSII is a light-driven water:plastoquinone oxidoreductase that uses light energy to abstract electrons from H(2)O, generating O(2) and a proton gradient subsequently used for ATP formation. It consists of a core antenna complex that captures photons, and an electron transfer chain that converts photonic excitation into a charge separation. The polypeptide is Photosystem II reaction center protein J (Illicium oligandrum (Star anise)).